We begin with the raw amino-acid sequence, 168 residues long: Small ribosomal subunit protein uS5 (168 aa).

The 64-residue stretch at 14 to 77 (FEERVVSINR…EAAKKNLITV (64 aa)) folds into the S5 DRBM domain.

The protein belongs to the universal ribosomal protein uS5 family. In terms of assembly, part of the 30S ribosomal subunit. Contacts proteins S4 and S8.

In terms of biological role, with S4 and S12 plays an important role in translational accuracy. Functionally, located at the back of the 30S subunit body where it stabilizes the conformation of the head with respect to the body. The chain is Small ribosomal subunit protein uS5 from Lactococcus lactis subsp. lactis (strain IL1403) (Streptococcus lactis).